Consider the following 850-residue polypeptide: Bifunctional levopimaradiene synthase, chloroplastic (850 aa).

The N-terminal 52 residues, Met-1 to Val-52, are a transit peptide targeting the chloroplast. A substrate-binding site is contributed by Lys-250. Mg(2+) contacts are provided by Asp-383 and Asp-385. A DXDD motif motif is present at residues Asp-383–Asp-386. Lys-470 is a binding site for substrate. 5 residues coordinate Mg(2+): Asp-602, Asp-606, Asn-746, Thr-750, and Glu-754. A DDXXD motif motif is present at residues Asp-602–Asp-606.

This sequence belongs to the terpene synthase family. Tpsd subfamily. The cofactor is Mg(2+). As to expression, expressed in young tissues such as flushing buds and green bark tissues. Lower levels in mature needles and bark.

The protein localises to the plastid. It is found in the chloroplast. It carries out the reaction (2E,6E,10E)-geranylgeranyl diphosphate = (+)-copalyl diphosphate. The enzyme catalyses (+)-copalyl diphosphate = abieta-8(14),12-diene + diphosphate. The catalysed reaction is (+)-copalyl diphosphate = neoabietadiene + diphosphate. The protein operates within terpene metabolism; oleoresin biosynthesis. Its function is as follows. Involved in defensive oleoresin formation in conifers in response to insect attack or other injury. Involved in diterpene (C20) olefins biosynthesis. Bifunctional enzyme that catalyzes two sequential cyclizations of geranylgeranyl diphosphate (GGPP) to levopimaradiene. Levopimaradiene is the major products of the enzyme followed by abietadiene, neoabietadiene and palustradiene. No activity with geranyl diphosphate (GPP) or farnesyl diphosphate (FPP) as substrate. In Pinus taeda (Loblolly pine), this protein is Bifunctional levopimaradiene synthase, chloroplastic (LPS).